The chain runs to 154 residues: Hemiasterlin resistant protein 1 (154 aa).

Disordered regions lie at residues 1-64 (MVRR…PGLM) and 86-109 (GMFTGGGSSHAEQAPAAAAAPAGA). 3 stretches are compositionally biased toward low complexity: residues 7–28 (ASPSPSAPVRSAPRPAAQSSFA), 48–57 (TPMGAPMGAP), and 96–109 (AEQAPAAAAAPAGA). Positions 116-154 (SQPCEFEWRQFVDCAQNQSDVSLCNGFNDIFKQCKARYA) constitute a CHCH domain. 2 consecutive short sequence motifs (cx9C motif) follow at residues 119–129 (CEFEWRQFVDC) and 139–149 (CNGFNDIFKQC). 2 disulfide bridges follow: Cys-119/Cys-149 and Cys-129/Cys-139.

The protein is Hemiasterlin resistant protein 1 (har-1) of Caenorhabditis elegans.